Reading from the N-terminus, the 547-residue chain is Chaperonin GroEL (547 aa).

Residues 30–33, Lys51, 87–91, Gly415, and Asp495 each bind ATP; these read TLGP and DGTTT. Residues 526–547 form a disordered region; that stretch reads KKESAGGGGMPGGMGGMGGMDF. A compositionally biased stretch (gly residues) spans 530–547; the sequence is AGGGGMPGGMGGMGGMDF.

This sequence belongs to the chaperonin (HSP60) family. As to quaternary structure, forms a cylinder of 14 subunits composed of two heptameric rings stacked back-to-back. Interacts with the co-chaperonin GroES.

The protein resides in the cytoplasm. The enzyme catalyses ATP + H2O + a folded polypeptide = ADP + phosphate + an unfolded polypeptide.. In terms of biological role, together with its co-chaperonin GroES, plays an essential role in assisting protein folding. The GroEL-GroES system forms a nano-cage that allows encapsulation of the non-native substrate proteins and provides a physical environment optimized to promote and accelerate protein folding. This Hyphomonas neptunium (strain ATCC 15444) protein is Chaperonin GroEL.